Consider the following 407-residue polypeptide: BMP-like protein unc-129 (407 aa).

Positions 1–18 are cleaved as a signal peptide; sequence MRRLPIVLLLSVFSIANC. 3 N-linked (GlcNAc...) asparagine glycosylation sites follow: asparagine 27, asparagine 42, and asparagine 211. Positions 252–283 are disordered; the sequence is DDREPIKRKNGKKNSLSEEISSEDVWQGFGEE. The N-linked (GlcNAc...) asparagine glycan is linked to asparagine 395.

The protein belongs to the TGF-beta family. In terms of assembly, interacts with netrin receptor unc-5; the interaction is direct.

Its subcellular location is the secreted. It is found in the extracellular space. Functionally, required for the migration of axonal growth-cones and distal tip cells (DTC) along the dorsal-ventral axis of the body wall. Acts cell nonautonomously and independently of the classical daf-4, sma-6 or daf-1 TGFbeta receptor signaling. During axon migration, facilitates long-range repulsive guidance of unc-6/netrin by enhancing unc-5-unc-40 signaling at the expense of unc-5 alone signaling, probably through direct interaction with receptor unc-5. Involved in cell-cell contact formation in sensory rays in the developing male tail, via a pathway involving plx-2 and mab-20/semaphorin-2A. This is BMP-like protein unc-129 from Caenorhabditis elegans.